The sequence spans 368 residues: CCA-adding enzyme (368 aa).

The ATP site is built by Gly-8 and Arg-11. Residues Gly-8 and Arg-11 each contribute to the CTP site. Asp-21 and Asp-23 together coordinate Mg(2+). ATP is bound by residues Arg-91, Arg-137, and Arg-140. CTP is bound by residues Arg-91, Arg-137, and Arg-140.

It belongs to the tRNA nucleotidyltransferase/poly(A) polymerase family. Bacterial CCA-adding enzyme type 2 subfamily. It depends on Mg(2+) as a cofactor.

It catalyses the reaction a tRNA precursor + 2 CTP + ATP = a tRNA with a 3' CCA end + 3 diphosphate. It carries out the reaction a tRNA with a 3' CCA end + 2 CTP + ATP = a tRNA with a 3' CCACCA end + 3 diphosphate. Its function is as follows. Catalyzes the addition and repair of the essential 3'-terminal CCA sequence in tRNAs without using a nucleic acid template. Adds these three nucleotides in the order of C, C, and A to the tRNA nucleotide-73, using CTP and ATP as substrates and producing inorganic pyrophosphate. tRNA 3'-terminal CCA addition is required both for tRNA processing and repair. Also involved in tRNA surveillance by mediating tandem CCA addition to generate a CCACCA at the 3' terminus of unstable tRNAs. While stable tRNAs receive only 3'-terminal CCA, unstable tRNAs are marked with CCACCA and rapidly degraded. This chain is CCA-adding enzyme, found in Pseudomonas putida (strain ATCC 700007 / DSM 6899 / JCM 31910 / BCRC 17059 / LMG 24140 / F1).